Reading from the N-terminus, the 367-residue chain is Probable protein phosphatase 2C 67 (367 aa).

Residues 1–79 (MAHQKREATS…DEKAATNSNV (79 aa)) form a disordered region. Basic and acidic residues predominate over residues 31–46 (AEKEHILTSDASHETN). The region spanning 91–365 (EADAAEDKGC…DNCTAVLIVF (275 aa)) is the PPM-type phosphatase domain. 4 residues coordinate Mn(2+): aspartate 131, glycine 132, aspartate 312, and aspartate 356.

Belongs to the PP2C family. The cofactor is Mg(2+). Mn(2+) is required as a cofactor.

The catalysed reaction is O-phospho-L-seryl-[protein] + H2O = L-seryl-[protein] + phosphate. It catalyses the reaction O-phospho-L-threonyl-[protein] + H2O = L-threonyl-[protein] + phosphate. This chain is Probable protein phosphatase 2C 67, found in Oryza sativa subsp. japonica (Rice).